Reading from the N-terminus, the 851-residue chain is Envelope glycoprotein gp160 (851 aa).

A signal peptide spans 1-24; that stretch reads MEPGRNQLLVAILLTSACLIYCKQ. Residues 25–669 are Extracellular-facing; it reads YVTVFYGIPA…LTSWIKYIQY (645 aa). Asparagine 37 carries an N-linked (GlcNAc...) asparagine; by host glycan. A disulfide bond links cysteine 44 and cysteine 57. 23 N-linked (GlcNAc...) asparagine; by host glycosylation sites follow: asparagine 70, asparagine 114, asparagine 127, asparagine 134, asparagine 142, asparagine 157, asparagine 184, asparagine 195, asparagine 227, asparagine 230, asparagine 261, asparagine 267, asparagine 278, asparagine 289, asparagine 299, asparagine 355, asparagine 361, asparagine 388, asparagine 398, asparagine 401, asparagine 438, asparagine 453, and asparagine 456. Intrachain disulfides connect cysteine 101-cysteine 203, cysteine 108-cysteine 194, cysteine 113-cysteine 154, cysteine 216-cysteine 246, and cysteine 226-cysteine 238. Positions 113 to 153 are V1; the sequence is CNITSGTTATPSPPNITIIDENSTCIGDNNCTGLGKEEVVE. The tract at residues 154-194 is V2; sequence CEFNMTGLEQDKKRKYNDAWYSRDVVCDKTNGTGTCYMRHC. The interval 294–327 is V3; that stretch reads CKRPGNKTVVPITLMSGRRFHSRPVYNKKPGQAW. Cysteines 294 and 328 form a disulfide. 2 disulfides stabilise this stretch: cysteine 380/cysteine 437 and cysteine 387/cysteine 410. Positions 387–410 are V4; the sequence is CNMTWFLNWVENKTNQTHGNYAPC. Residues 453 to 459 form a V5 region; that stretch reads NQTNITF. Positions 502 to 522 are fusion peptide; that stretch reads GVFVLGFLGFLATAGSAMGGA. Residues 565–581 are immunosuppression; the sequence is LQARVTAIEKYLKDQAQ. Asparagine 601, asparagine 610, and asparagine 626 each carry an N-linked (GlcNAc...) asparagine; by host glycan. The MPER; binding to GalCer stretch occupies residues 647 to 668; that stretch reads KLNSWDVFGNWFDLTSWIKYIQ. The helical transmembrane segment at 670–690 threads the bilayer; the sequence is GVYIVVGIIGLRIAIYIVQLL. Residues 691-851 lie on the Cytoplasmic side of the membrane; it reads SRLRKGYRPV…IRQGAEIALL (161 aa). Positions 697–700 match the YXXV motif; contains endocytosis signal motif; that stretch reads YRPV. The S-palmitoyl cysteine; by host moiety is linked to residue cysteine 763. The short motif at 850-851 is the Di-leucine internalization motif element; it reads LL.

As to quaternary structure, the mature envelope protein (Env) consists of a homotrimer of non-covalently associated gp120-gp41 heterodimers. The resulting complex protrudes from the virus surface as a spike. There seems to be as few as 10 spikes on the average virion. Interacts with human CD4, CCR5 and CXCR4, to form a P4HB/PDI-CD4-CXCR4-gp120 complex. Gp120 also interacts with the C-type lectins CD209/DC-SIGN and CLEC4M/DC-SIGNR (collectively referred to as DC-SIGN(R)). Gp120 and gp41 interact with GalCer. The mature envelope protein (Env) consists of a homotrimer of non-covalently associated gp120-gp41 heterodimers. The resulting complex protrudes from the virus surface as a spike. There seems to be as few as 10 spikes on the average virion. Specific enzymatic cleavages in vivo yield mature proteins. Envelope glycoproteins are synthesized as an inactive precursor that is heavily N-glycosylated and processed likely by host cell furin in the Golgi to yield the mature SU and TM proteins. The cleavage site between SU and TM requires the minimal sequence [KR]-X-[KR]-R. Post-translationally, palmitoylation of the transmembrane protein and of Env polyprotein (prior to its proteolytic cleavage) is essential for their association with host cell membrane lipid rafts. Palmitoylation is therefore required for envelope trafficking to classical lipid rafts, but not for viral replication.

Its subcellular location is the virion membrane. The protein localises to the host cell membrane. It localises to the host endosome membrane. Its function is as follows. The surface protein gp120 (SU) attaches the virus to the host lymphoid cell by binding to the primary receptor CD4. This interaction induces a structural rearrangement creating a high affinity binding site for a chemokine coreceptor like CXCR4 and/or CCR5. This peculiar 2 stage receptor-interaction strategy allows gp120 to maintain the highly conserved coreceptor-binding site in a cryptic conformation, protected from neutralizing antibodies. Since CD4 also displays a binding site for the disulfide-isomerase P4HB/PDI, a P4HB/PDI-CD4-CXCR4-gp120 complex may form. In that complex, P4HB/PDI could reach and reduce gp120 disulfide bonds, causing major conformational changes in gp120. TXN, another PDI family member could also be involved in disulfide rearrangements in Env during fusion. These changes are transmitted to the transmembrane protein gp41 and are thought to activate its fusogenic potential by unmasking its fusion peptide. Functionally, the surface protein gp120 is a ligand for CD209/DC-SIGN and CLEC4M/DC-SIGNR, which are respectively found on dendritic cells (DCs), and on endothelial cells of liver sinusoids and lymph node sinuses. These interactions allow capture of viral particles at mucosal surfaces by these cells and subsequent transmission to permissive cells. DCs are professional antigen presenting cells, critical for host immunity by inducing specific immune responses against a broad variety of pathogens. They act as sentinels in various tissues where they take up antigen, process it, and present it to T-cells following migration to lymphoid organs. HIV subverts the migration properties of dendritic cells to gain access to CD4+ T-cells in lymph nodes. Virus transmission to permissive T-cells occurs either in trans (without DCs infection, through viral capture and transmission), or in cis (following DCs productive infection, through the usual CD4-gp120 interaction), thereby inducing a robust infection. In trans infection, bound virions remain infectious over days and it is proposed that they are not degraded, but protected in non-lysosomal acidic organelles within the DCs close to the cell membrane thus contributing to the viral infectious potential during DCs' migration from the periphery to the lymphoid tissues. On arrival at lymphoid tissues, intact virions recycle back to DCs' cell surface allowing virus transmission to CD4+ T-cells. Virion capture also seems to lead to MHC-II-restricted viral antigen presentation, and probably to the activation of HIV-specific CD4+ cells. In terms of biological role, the transmembrane protein gp41 (TM) acts as a class I viral fusion protein. Under the current model, the protein has at least 3 conformational states: pre-fusion native state, pre-hairpin intermediate state, and post-fusion hairpin state. During fusion of viral and target intracellular membranes, the coiled coil regions (heptad repeats) assume a trimer-of-hairpins structure, positioning the fusion peptide in close proximity to the C-terminal region of the ectodomain. The formation of this structure appears to drive apposition and subsequent fusion of viral and target cell membranes. Complete fusion occurs in host cell endosomes and is dynamin-dependent, however some lipid transfer might occur at the plasma membrane. The virus undergoes clathrin-dependent internalization long before endosomal fusion, thus minimizing the surface exposure of conserved viral epitopes during fusion and reducing the efficacy of inhibitors targeting these epitopes. Membranes fusion leads to delivery of the nucleocapsid into the cytoplasm. The envelope glycoprotein gp160 precursor down-modulates cell surface CD4 antigen by interacting with it in the endoplasmic reticulum and blocking its transport to the cell surface. Its function is as follows. The gp120-gp41 heterodimer seems to contribute to T-cell depletion during HIV-1 infection. The envelope glycoproteins expressed on the surface of infected cells induce apoptosis through an interaction with uninfected cells expressing the receptor (CD4) and the coreceptors CXCR4 or CCR5. This type of bystander killing may be obtained by at least three distinct mechanisms. First, the interaction between the 2 cells can induce cellular fusion followed by nuclear fusion within the syncytium. Syncytia are condemned to die from apoptosis. Second, the 2 interacting cells may not fuse entirely and simply exchange plasma membrane lipids, after a sort of hemifusion process, followed by rapid death. Third, it is possible that virus-infected cells, on the point of undergoing apoptosis, fuse with CD4-expressing cells, in which case apoptosis is rapidly transmitted from one cell to the other and thus occurs in a sort of contagious fashion. Functionally, the gp120-gp41 heterodimer allows rapid transcytosis of the virus through CD4 negative cells such as simple epithelial monolayers of the intestinal, rectal and endocervical epithelial barriers. Both gp120 and gp41 specifically recognize glycosphingolipids galactosyl-ceramide (GalCer) or 3' sulfo-galactosyl-ceramide (GalS) present in the lipid rafts structures of epithelial cells. Binding to these alternative receptors allows the rapid transcytosis of the virus through the epithelial cells. This transcytotic vesicle-mediated transport of virions from the apical side to the basolateral side of the epithelial cells does not involve infection of the cells themselves. This chain is Envelope glycoprotein gp160 (env), found in Human immunodeficiency virus type 2 subtype A (isolate D194) (HIV-2).